A 383-amino-acid chain; its full sequence is Large ribosomal subunit protein uL2m (383 aa).

2 disordered regions span residues 97–122 (FPKK…GGGH) and 322–357 (MNAN…YKTR). Basic residues-rich tracts occupy residues 106 to 122 (GRNH…GGGH) and 330 to 340 (GGGRGKSKGNR).

It belongs to the universal ribosomal protein uL2 family. Component of the mitochondrial large ribosomal subunit (mt-LSU). Mature N.crassa 74S mitochondrial ribosomes consist of a small (37S) and a large (54S) subunit. The 37S small subunit contains a 16S ribosomal RNA (16S mt-rRNA) and 32 different proteins. The 54S large subunit contains a 23S rRNA (23S mt-rRNA) and 42 different proteins.

It is found in the mitochondrion. Its function is as follows. Component of the mitochondrial ribosome (mitoribosome), a dedicated translation machinery responsible for the synthesis of mitochondrial genome-encoded proteins, including at least some of the essential transmembrane subunits of the mitochondrial respiratory chain. The mitoribosomes are attached to the mitochondrial inner membrane and translation products are cotranslationally integrated into the membrane. This chain is Large ribosomal subunit protein uL2m (rml2), found in Neurospora crassa (strain ATCC 24698 / 74-OR23-1A / CBS 708.71 / DSM 1257 / FGSC 987).